We begin with the raw amino-acid sequence, 399 residues long: Phosphate acyltransferase (399 aa).

The protein belongs to the PlsX family. As to quaternary structure, homodimer. Probably interacts with PlsY.

It is found in the cytoplasm. The enzyme catalyses a fatty acyl-[ACP] + phosphate = an acyl phosphate + holo-[ACP]. It participates in lipid metabolism; phospholipid metabolism. Functionally, catalyzes the reversible formation of acyl-phosphate (acyl-PO(4)) from acyl-[acyl-carrier-protein] (acyl-ACP). This enzyme utilizes acyl-ACP as fatty acyl donor, but not acyl-CoA. The chain is Phosphate acyltransferase from Rhodobacter capsulatus (Rhodopseudomonas capsulata).